Here is a 296-residue protein sequence, read N- to C-terminus: Protoheme IX farnesyltransferase (296 aa).

Over 1–9 (MMFKQYLQV) the chain is Cytoplasmic. The helical transmembrane segment at 10 to 28 (TKPGIIFGNLISVIGGFLL) threads the bilayer. The Periplasmic segment spans residues 29-37 (ASKGSIDYP). The helical transmembrane segment at 38 to 56 (LFIYTLVGVSLVVASGCVF) threads the bilayer. The Cytoplasmic portion of the chain corresponds to 57–78 (NNYIDRDIDRKMERTKNRVLVK). Residues 79 to 97 (GLISPAVSLVYATLLGIAG) traverse the membrane as a helical segment. Topologically, residues 98–107 (FMLLWFGANP) are periplasmic. The helical transmembrane segment at 108-126 (LACWLGVMGFVVYVGVYSL) threads the bilayer. Residues 127–197 (YMKRHSVYGT…YQAANIPVLP (71 aa)) are Cytoplasmic-facing. The helical transmembrane segment at 198–216 (VVKGISVAKNHITLYIIAF) threads the bilayer. Residues 217 to 228 (AVATLMLSLGGY) are Periplasmic-facing. A helical membrane pass occupies residues 229 to 247 (AGYKYLVVAAAVSVWWLGM). Topologically, residues 248–268 (ALRGYKVADDRIWARKLFGFS) are cytoplasmic. The chain crosses the membrane as a helical span at residues 269–287 (IIAITALSVMMSVDFMVPD). At 288–296 (SHTLLAAVW) the chain is on the periplasmic side.

It belongs to the UbiA prenyltransferase family. Protoheme IX farnesyltransferase subfamily.

The protein resides in the cell inner membrane. The catalysed reaction is heme b + (2E,6E)-farnesyl diphosphate + H2O = Fe(II)-heme o + diphosphate. Its pathway is porphyrin-containing compound metabolism; heme O biosynthesis; heme O from protoheme: step 1/1. Converts heme B (protoheme IX) to heme O by substitution of the vinyl group on carbon 2 of heme B porphyrin ring with a hydroxyethyl farnesyl side group. In Shigella flexneri, this protein is Protoheme IX farnesyltransferase.